We begin with the raw amino-acid sequence, 1461 residues long: Neogenin (1461 aa).

The signal sequence occupies residues 1–33 (MAAERGARRLLSTPSFWLYCLLLLGRRAPGAAA). Residues 34 to 1105 (ARSGSAPQSP…PTSPLDSNML (1072 aa)) are Extracellular-facing. 4 Ig-like C2-type domains span residues 52–141 (PFYF…TIIS), 152–238 (PRFT…VELK), 243–336 (PEVI…AELT), and 341–426 (PEFL…AQLI). The N-linked (GlcNAc...) asparagine glycan is linked to Asn-73. Cystine bridges form between Cys-74–Cys-129, Cys-173–Cys-221, and Cys-270–Cys-320. N-linked (GlcNAc...) asparagine glycosylation is present at Asn-210. An N-linked (GlcNAc...) asparagine glycan is attached at Asn-326. A disulfide bridge connects residues Cys-362 and Cys-410. 6 consecutive Fibronectin type-III domains span residues 441-535 (APRD…TQPE), 541-631 (PAPN…TLSD), 636-731 (APQN…TFES), 741-831 (VPSS…RPHT), 856-952 (PPVG…TFEL), and 957-1054 (PPKD…TPKA). N-linked (GlcNAc...) asparagine glycans are attached at residues Asn-470 and Asn-489. Residues Asn-639 and Asn-715 are each glycosylated (N-linked (GlcNAc...) asparagine). An N-linked (GlcNAc...) asparagine glycan is attached at Asn-909. Residues 1041–1097 (GPMSEAVQFRTPKADSSDKMPNDQASGSGGKGSRLPDLGSDYKPPMSGSNSPHGSPT) form a disordered region. Positions 1052 to 1061 (PKADSSDKMP) are enriched in basic and acidic residues. Positions 1087 to 1097 (SGSNSPHGSPT) are enriched in polar residues. Residues 1106 to 1126 (LVIIVSVGVITIVVVVIIAVF) traverse the membrane as a helical segment. Residues 1127–1461 (CTRRTTSHQK…MKDLNAITTA (335 aa)) lie on the Cytoplasmic side of the membrane. Disordered stretches follow at residues 1138–1160 (KRAA…DVKP), 1174–1206 (PIDK…SMDS), 1235–1276 (PKMM…PARS), and 1289–1381 (TSMS…ALPS). 2 positions are modified to phosphoserine: Ser-1178 and Ser-1194. Over residues 1191–1206 (PRNSQDITPVDNSMDS) the composition is skewed to polar residues. Thr-1198 is modified (phosphothreonine). Composition is skewed to polar residues over residues 1289 to 1322 (TSMS…TCCT) and 1330 to 1349 (ATSS…QSLP). The segment covering 1366–1375 (AIPPPGPPTY) has biased composition (pro residues). At Ser-1401 the chain carries Phosphoserine. Position 1404 is a phosphothreonine (Thr-1404). Phosphoserine is present on residues Ser-1432, Ser-1434, and Ser-1435.

It belongs to the immunoglobulin superfamily. DCC family. As to quaternary structure, interacts with MYO10. Interacts with RGMA and RGMB. Interacts with BMP2, BMP4, BMP6, and BMP7. In terms of tissue distribution, widely expressed and also in cancer cell lines.

The protein localises to the cell membrane. Its function is as follows. Multi-functional cell surface receptor regulating cell adhesion in many diverse developmental processes, including neural tube and mammary gland formation, myogenesis and angiogenesis. Receptor for members of the BMP, netrin, and repulsive guidance molecule (RGM) families. Netrin-Neogenin interactions result in a chemoattractive axon guidance response and cell-cell adhesion, the interaction between NEO1/Neogenin and RGMa and RGMb induces a chemorepulsive response. This Homo sapiens (Human) protein is Neogenin (NEO1).